The following is a 767-amino-acid chain: Actin filament-associated protein 1-like 1 (767 aa).

Basic and acidic residues predominate over residues 83–97; it reads LRDMSDDGERSKEAS. The interval 83-145 is disordered; the sequence is LRDMSDDGER…KSPEYISSHN (63 aa). 5 positions are modified to phosphoserine: serine 87, serine 93, serine 97, serine 103, and serine 152. Polar residues predominate over residues 164 to 173; sequence SYPTTRMNGE. The segment at 164–210 is disordered; sequence SYPTTRMNGESKSSYNDSDAMSSSYESYDEEEEEEKGRQPKHQWPSE. Positions 174-189 are enriched in low complexity; the sequence is SKSSYNDSDAMSSSYE. In terms of domain architecture, PH 1 spans 219-315; it reads DCRICAFLLR…WLKVIREVSR (97 aa). Phosphoserine occurs at positions 328 and 342. The disordered stretch occupies residues 341-381; it reads LSQEKQNSDSDSLGMNDSSSTLSRREACEHGKGKKNSLAEL. A compositionally biased stretch (polar residues) spans 349-362; sequence DSDSLGMNDSSSTL. The PH 2 domain occupies 417 to 511; sequence EAPCCGYLNV…WLGLLLVEMG (95 aa). Tyrosine 556 bears the Phosphotyrosine mark. A disordered region spans residues 563-605; that stretch reads KVQDEEPQRPTGAQVKRHASSCSEKSHRADPQVKVKRHASSAN. A compositionally biased stretch (basic and acidic residues) spans 586-595; the sequence is EKSHRADPQV. Residues 610–700 are a coiled coil; that stretch reads GKNRAEEDAR…AVKERLQQSL (91 aa). Residues 704-767 form a disordered region; it reads PALGLSVSSK…KAKEWEMKKT (64 aa). Polar residues predominate over residues 709–733; the sequence is SVSSKSKSQETTNKPQSSVPEQSLP. Serine 746 bears the Phosphoserine mark. Basic and acidic residues predominate over residues 758 to 767; it reads KAKEWEMKKT.

In terms of assembly, interacts with CTTN.

The protein resides in the cytoplasm. The protein localises to the cell projection. It is found in the podosome. Its subcellular location is the invadopodium. In terms of biological role, may be involved in podosome and invadosome formation. This chain is Actin filament-associated protein 1-like 1 (Afap1l1), found in Rattus norvegicus (Rat).